Reading from the N-terminus, the 396-residue chain is Large ribosomal subunit protein uL4A (396 aa).

The segment covering 352-373 (KAKEKKPDDGKPKAKKPLDAKT) has biased composition (basic and acidic residues). The segment at 352–374 (KAKEKKPDDGKPKAKKPLDAKTK) is disordered.

The protein belongs to the universal ribosomal protein uL4 family. Component of the large ribosomal subunit.

Its subcellular location is the cytoplasm. Functionally, component of the large ribosomal subunit. The ribosome is a large ribonucleoprotein complex responsible for the synthesis of proteins in the cell. This chain is Large ribosomal subunit protein uL4A (rpl4-a), found in Xenopus laevis (African clawed frog).